The primary structure comprises 133 residues: Nickel-responsive regulator (133 aa).

Ni(2+) is bound by residues His76, His87, His89, and Cys95.

This sequence belongs to the transcriptional regulatory CopG/NikR family. In terms of assembly, homotetramer. Requires Ni(2+) as cofactor.

Transcriptional repressor of the nikABCDE operon. Is active in the presence of excessive concentrations of intracellular nickel. This chain is Nickel-responsive regulator, found in Enterobacter sp. (strain 638).